Reading from the N-terminus, the 255-residue chain is U2 small nuclear ribonucleoprotein A' (255 aa).

4 LRR repeats span residues 20–41 (RDRE…GATL), 43–64 (QFDA…PLLR), 65–86 (RLKT…LDQA), and 89–110 (CLTE…DPLA). Residues 123-161 (NPVTNKKHYRLYVIYKVPQVRVLDFQKVKLKERQEAEKM) form the LRRCT domain. An N6-acetyllysine; alternate modification is found at lysine 172. Residue lysine 172 forms a Glycyl lysine isopeptide (Lys-Gly) (interchain with G-Cter in SUMO2); alternate linkage. A phosphoserine mark is found at serine 178 and serine 197. Residues 179–199 (KTFNPGAGLPTDKKKGGPSAG) form a disordered region. Residue lysine 221 forms a Glycyl lysine isopeptide (Lys-Gly) (interchain with G-Cter in SUMO2) linkage. A disordered region spans residues 222–255 (GLLQSGQIPGRERRSGPSDEGEEEIEDDTVTNGS). Phosphoserine is present on residues serine 236 and serine 255. The segment covering 240 to 255 (DEGEEEIEDDTVTNGS) has biased composition (acidic residues).

The protein belongs to the U2 small nuclear ribonucleoprotein A family. In terms of assembly, identified in the spliceosome B complex. Identified in the spliceosome C complex. Found in a pre-mRNA splicing complex with SFRS4, SFRS5, SNRNP70, SNRPA1, SRRM1 and SRRM2. Found in a pre-mRNA exonic splicing enhancer (ESE) complex with SNRNP70, SNRPA1, SRRM1 and TRA2B. Contributes to the binding of stem loop IV of U2 snRNA with SNRPB2.

It is found in the nucleus. Its function is as follows. Involved in pre-mRNA splicing as component of the spliceosome. Associated with sn-RNP U2, where it contributes to the binding of stem loop IV of U2 snRNA. This is U2 small nuclear ribonucleoprotein A' (Snrpa1) from Mus musculus (Mouse).